We begin with the raw amino-acid sequence, 354 residues long: Histidinol-phosphate aminotransferase (354 aa).

Lys210 carries the N6-(pyridoxal phosphate)lysine modification.

It belongs to the class-II pyridoxal-phosphate-dependent aminotransferase family. Histidinol-phosphate aminotransferase subfamily. In terms of assembly, homodimer. Pyridoxal 5'-phosphate is required as a cofactor.

The catalysed reaction is L-histidinol phosphate + 2-oxoglutarate = 3-(imidazol-4-yl)-2-oxopropyl phosphate + L-glutamate. The protein operates within amino-acid biosynthesis; L-histidine biosynthesis; L-histidine from 5-phospho-alpha-D-ribose 1-diphosphate: step 7/9. In Clostridium botulinum (strain Okra / Type B1), this protein is Histidinol-phosphate aminotransferase.